The following is a 648-amino-acid chain: Rho GTPase-activating protein 25 (648 aa).

The 106-residue stretch at 46–151 folds into the PH domain; it reads RPIKVGWLKK…WVKFLRRVAG (106 aa). In terms of domain architecture, Rho-GAP spans 160 to 354; that stretch reads QRLDETVAYE…MMIRDHEVLF (195 aa). The disordered stretch occupies residues 356–559; that stretch reads KSKDAPISPP…DLDSLQRTVQ (204 aa). Ser-363, Ser-396, and Ser-403 each carry phosphoserine. Over residues 393–410 the composition is skewed to polar residues; sequence RTDSFSNTASSPDATSPT. Phosphothreonine is present on Thr-407. The span at 417–431 shows a compositional bias: basic and acidic residues; that stretch reads QHQEDSGKAPRENPG. Polar residues-rich tracts occupy residues 453–462 and 497–515; these read SAFQGTTSSK and DQRT…SQGN. A Phosphoserine modification is found at Ser-537. Positions 540–641 form a coiled coil; that stretch reads EAGSKNSGED…VKEFVKSMEK (102 aa).

Its function is as follows. GTPase activator for the Rho-type GTPases by converting them to an inactive GDP-bound state. This Mus musculus (Mouse) protein is Rho GTPase-activating protein 25 (Arhgap25).